We begin with the raw amino-acid sequence, 359 residues long: MLNIYDYTLEELKRRLHPPFRAKQLYHWLYHRYEEEFEKMHNLSKEIRQKLTQDYSATLTKVVREEVSEDGSRKYLFQTHDGLTYEAVLLKMKEKKEDEEGRIVEGEKYTICVSSQVGCKVGCSFCFTAKGGFVRNLSAGEIVYQIVALKRLNALAPEKRVNIVYMGMGEPLDNFENLIQAIRILSELDGLSISTKRQTISTSGIAPKIEKLGALDLGVQLAISLHAVDDELRTRLIPMNKAYNIASIIEAVRRFPIDSRKRVMFEYLVIKGVNDDEKSAKTLLKLLNGIKSKVNLIYFNPHEGSEFERPLESKMVAFQKYLTDRGLLCTIRESKGIDISAACGQLREKIIKEENCGNR.

Glu-86 acts as the Proton acceptor in catalysis. The Radical SAM core domain occupies 105 to 338 (EGEKYTICVS…CTIRESKGID (234 aa)). An intrachain disulfide couples Cys-112 to Cys-343. [4Fe-4S] cluster contacts are provided by Cys-119, Cys-123, and Cys-126. Residues 169–170 (GE), Ser-201, 224–226 (SLH), and Asn-300 contribute to the S-adenosyl-L-methionine site. Catalysis depends on Cys-343, which acts as the S-methylcysteine intermediate.

This sequence belongs to the radical SAM superfamily. RlmN family. Requires [4Fe-4S] cluster as cofactor.

The protein resides in the cytoplasm. The catalysed reaction is adenosine(2503) in 23S rRNA + 2 reduced [2Fe-2S]-[ferredoxin] + 2 S-adenosyl-L-methionine = 2-methyladenosine(2503) in 23S rRNA + 5'-deoxyadenosine + L-methionine + 2 oxidized [2Fe-2S]-[ferredoxin] + S-adenosyl-L-homocysteine. The enzyme catalyses adenosine(37) in tRNA + 2 reduced [2Fe-2S]-[ferredoxin] + 2 S-adenosyl-L-methionine = 2-methyladenosine(37) in tRNA + 5'-deoxyadenosine + L-methionine + 2 oxidized [2Fe-2S]-[ferredoxin] + S-adenosyl-L-homocysteine. Functionally, specifically methylates position 2 of adenine 2503 in 23S rRNA and position 2 of adenine 37 in tRNAs. m2A2503 modification seems to play a crucial role in the proofreading step occurring at the peptidyl transferase center and thus would serve to optimize ribosomal fidelity. This Wolinella succinogenes (strain ATCC 29543 / DSM 1740 / CCUG 13145 / JCM 31913 / LMG 7466 / NCTC 11488 / FDC 602W) (Vibrio succinogenes) protein is Dual-specificity RNA methyltransferase RlmN.